Reading from the N-terminus, the 260-residue chain is 5'-nucleotidase SurE (260 aa).

Residues aspartate 10, aspartate 11, serine 41, and asparagine 95 each contribute to the a divalent metal cation site.

This sequence belongs to the SurE nucleotidase family. It depends on a divalent metal cation as a cofactor.

It is found in the cytoplasm. The catalysed reaction is a ribonucleoside 5'-phosphate + H2O = a ribonucleoside + phosphate. In terms of biological role, nucleotidase that shows phosphatase activity on nucleoside 5'-monophosphates. This chain is 5'-nucleotidase SurE, found in Methanoregula boonei (strain DSM 21154 / JCM 14090 / 6A8).